The chain runs to 161 residues: MTKGPVRLDVGVSYALPRTGLPSSVSFRKWVAAALKGRIREADLAVRVVDEKEGCSLNHHYRGKDYATNVLSFPAEMPQGLPKGVKMPLLGDLVICAPVVAREAAEQGKSLSAHYAHLTVHGTLHLLGWDHEDDKEADAMEQLEREILAELGIDDPYAGER.

Zn(2+) contacts are provided by H121, H125, and H131.

The protein belongs to the endoribonuclease YbeY family. Zn(2+) is required as a cofactor.

It is found in the cytoplasm. Its function is as follows. Single strand-specific metallo-endoribonuclease involved in late-stage 70S ribosome quality control and in maturation of the 3' terminus of the 16S rRNA. This Xanthomonas campestris pv. campestris (strain 8004) protein is Endoribonuclease YbeY.